The chain runs to 116 residues: Ribosome-binding factor A (116 aa).

Belongs to the RbfA family. As to quaternary structure, monomer. Binds 30S ribosomal subunits, but not 50S ribosomal subunits or 70S ribosomes.

It is found in the cytoplasm. Its function is as follows. One of several proteins that assist in the late maturation steps of the functional core of the 30S ribosomal subunit. Associates with free 30S ribosomal subunits (but not with 30S subunits that are part of 70S ribosomes or polysomes). Required for efficient processing of 16S rRNA. May interact with the 5'-terminal helix region of 16S rRNA. The sequence is that of Ribosome-binding factor A from Levilactobacillus brevis (strain ATCC 367 / BCRC 12310 / CIP 105137 / JCM 1170 / LMG 11437 / NCIMB 947 / NCTC 947) (Lactobacillus brevis).